The sequence spans 316 residues: Probable cell division protein WhiA (316 aa).

The segment at residues 276–309 (SLEELGKIAEPQITKDAIAGRIRRLLQLAEKTEK) is a DNA-binding region (H-T-H motif).

It belongs to the WhiA family.

In terms of biological role, involved in cell division and chromosome segregation. This is Probable cell division protein WhiA from Bifidobacterium longum subsp. infantis (strain ATCC 15697 / DSM 20088 / JCM 1222 / NCTC 11817 / S12).